Consider the following 396-residue polypeptide: Elongation factor Tu (396 aa).

A tr-type G domain is found at 10-206; that stretch reads KPHVNIGTIG…ACDTYIPAPV (197 aa). The tract at residues 19–26 is G1; sequence GHVDHGKT. GTP is bound at residue 19 to 26; that stretch reads GHVDHGKT. A Mg(2+)-binding site is contributed by Thr-26. A G2 region spans residues 60 to 64; sequence GITIS. Residues 81-84 are G3; sequence DCPG. Residues 81-85 and 136-139 each bind GTP; these read DCPGH and NKVD. A G4 region spans residues 136–139; sequence NKVD. Positions 174–176 are G5; sequence SAL.

The protein belongs to the TRAFAC class translation factor GTPase superfamily. Classic translation factor GTPase family. EF-Tu/EF-1A subfamily. As to quaternary structure, monomer.

The protein localises to the cytoplasm. The enzyme catalyses GTP + H2O = GDP + phosphate + H(+). Functionally, GTP hydrolase that promotes the GTP-dependent binding of aminoacyl-tRNA to the A-site of ribosomes during protein biosynthesis. The protein is Elongation factor Tu of Bdellovibrio bacteriovorus (strain ATCC 15356 / DSM 50701 / NCIMB 9529 / HD100).